The following is an 833-amino-acid chain: Translation initiation factor IF-2 (833 aa).

Positions Met-1–Ala-247 are disordered. 2 stretches are compositionally biased toward basic and acidic residues: residues Gln-53–Lys-99 and Val-110–Glu-152. Residues Leu-153–Tyr-166 are compositionally biased toward acidic residues. The span at Lys-187–Lys-203 shows a compositional bias: basic residues. The segment covering Gly-204–Met-227 has biased composition (basic and acidic residues). One can recognise a tr-type G domain in the interval Thr-333–Thr-502. The interval Gly-342–Thr-349 is G1. GTP is bound at residue Gly-342–Thr-349. Positions Gly-367–His-371 are G2. The tract at residues Asp-388–Gly-391 is G3. Residues Asp-388–His-392 and Asn-442–Asp-445 contribute to the GTP site. The tract at residues Asn-442–Asp-445 is G4. The interval Ser-478–Lys-480 is G5.

This sequence belongs to the TRAFAC class translation factor GTPase superfamily. Classic translation factor GTPase family. IF-2 subfamily.

The protein resides in the cytoplasm. Its function is as follows. One of the essential components for the initiation of protein synthesis. Protects formylmethionyl-tRNA from spontaneous hydrolysis and promotes its binding to the 30S ribosomal subunits. Also involved in the hydrolysis of GTP during the formation of the 70S ribosomal complex. The protein is Translation initiation factor IF-2 (infB) of Pasteurella multocida (strain Pm70).